The sequence spans 463 residues: L-cystine uptake protein TcyP (463 aa).

10 helical membrane passes run 3-23 (TLLV…LFVM), 34-54 (VFTA…IYGP), 73-93 (YVKL…LGAF), 105-125 (ISGL…AVGI), 184-204 (PTST…FLGV), 225-245 (IVMR…LAIM), 262-282 (MFVI…LLLL), 338-358 (LSIG…MMIA), 369-389 (VFII…AGVG), and 394-414 (FAAL…GLLI).

The protein belongs to the dicarboxylate/amino acid:cation symporter (DAACS) (TC 2.A.23) family.

Its subcellular location is the cell membrane. Functionally, mediates uptake of L-cystine, the oxidized form of L-cysteine. Although it is more specific for L-cystine, it could also transport a much broader range of amino acids and sulfur compounds including S-methylcysteine. This Bacillus subtilis (strain 168) protein is L-cystine uptake protein TcyP (tcyP).